The sequence spans 174 residues: Crossover junction endodeoxyribonuclease RuvC (174 aa).

Catalysis depends on residues aspartate 8, glutamate 69, and aspartate 141. Residues aspartate 8, glutamate 69, and aspartate 141 each coordinate Mg(2+).

Belongs to the RuvC family. Homodimer which binds Holliday junction (HJ) DNA. The HJ becomes 2-fold symmetrical on binding to RuvC with unstacked arms; it has a different conformation from HJ DNA in complex with RuvA. In the full resolvosome a probable DNA-RuvA(4)-RuvB(12)-RuvC(2) complex forms which resolves the HJ. The cofactor is Mg(2+).

It is found in the cytoplasm. The catalysed reaction is Endonucleolytic cleavage at a junction such as a reciprocal single-stranded crossover between two homologous DNA duplexes (Holliday junction).. Functionally, the RuvA-RuvB-RuvC complex processes Holliday junction (HJ) DNA during genetic recombination and DNA repair. Endonuclease that resolves HJ intermediates. Cleaves cruciform DNA by making single-stranded nicks across the HJ at symmetrical positions within the homologous arms, yielding a 5'-phosphate and a 3'-hydroxyl group; requires a central core of homology in the junction. The consensus cleavage sequence is 5'-(A/T)TT(C/G)-3'. Cleavage occurs on the 3'-side of the TT dinucleotide at the point of strand exchange. HJ branch migration catalyzed by RuvA-RuvB allows RuvC to scan DNA until it finds its consensus sequence, where it cleaves and resolves the cruciform DNA. The polypeptide is Crossover junction endodeoxyribonuclease RuvC (Xanthomonas oryzae pv. oryzae (strain PXO99A)).